Reading from the N-terminus, the 148-residue chain is Deoxyuridine 5'-triphosphate nucleotidohydrolase (148 aa).

Substrate contacts are provided by residues 67–69 (RSG), asparagine 80, 84–86 (LID), and methionine 94.

Belongs to the dUTPase family. Mg(2+) is required as a cofactor.

It carries out the reaction dUTP + H2O = dUMP + diphosphate + H(+). Its pathway is pyrimidine metabolism; dUMP biosynthesis; dUMP from dCTP (dUTP route): step 2/2. In terms of biological role, this enzyme is involved in nucleotide metabolism: it produces dUMP, the immediate precursor of thymidine nucleotides and it decreases the intracellular concentration of dUTP so that uracil cannot be incorporated into DNA. This is Deoxyuridine 5'-triphosphate nucleotidohydrolase from Burkholderia ambifaria (strain MC40-6).